Reading from the N-terminus, the 207-residue chain is Cytochrome c biogenesis ATP-binding export protein CcmA (207 aa).

In terms of domain architecture, ABC transporter spans 4-207 (LEARELLCER…RISLTQTGAA (204 aa)). 36–43 (GSNGAGKT) contacts ATP.

The protein belongs to the ABC transporter superfamily. CcmA exporter (TC 3.A.1.107) family. As to quaternary structure, the complex is composed of two ATP-binding proteins (CcmA) and two transmembrane proteins (CcmB).

The protein resides in the cell inner membrane. It carries out the reaction heme b(in) + ATP + H2O = heme b(out) + ADP + phosphate + H(+). Its function is as follows. Part of the ABC transporter complex CcmAB involved in the biogenesis of c-type cytochromes; once thought to export heme, this seems not to be the case, but its exact role is uncertain. Responsible for energy coupling to the transport system. The polypeptide is Cytochrome c biogenesis ATP-binding export protein CcmA (Escherichia coli (strain UTI89 / UPEC)).